The primary structure comprises 419 residues: Enolase (419 aa).

A (2R)-2-phosphoglycerate-binding site is contributed by glutamine 161. The Proton donor role is filled by glutamate 205. Mg(2+)-binding residues include aspartate 240, glutamate 283, and aspartate 309. Residues lysine 334, arginine 363, serine 364, and lysine 385 each contribute to the (2R)-2-phosphoglycerate site. The active-site Proton acceptor is the lysine 334.

It belongs to the enolase family. The cofactor is Mg(2+).

It localises to the cytoplasm. The protein resides in the secreted. It is found in the cell surface. The enzyme catalyses (2R)-2-phosphoglycerate = phosphoenolpyruvate + H2O. It participates in carbohydrate degradation; glycolysis; pyruvate from D-glyceraldehyde 3-phosphate: step 4/5. Functionally, catalyzes the reversible conversion of 2-phosphoglycerate (2-PG) into phosphoenolpyruvate (PEP). It is essential for the degradation of carbohydrates via glycolysis. The polypeptide is Enolase (Saccharolobus solfataricus (strain ATCC 35092 / DSM 1617 / JCM 11322 / P2) (Sulfolobus solfataricus)).